The following is a 374-amino-acid chain: Probable quinol oxidase subunit 2 (374 aa).

An N-terminal signal peptide occupies residues 1–19 (MSKFKSLLLMFGTLILLSG). Cys20 is lipidated: N-palmitoyl cysteine. A lipid anchor (S-diacylglycerol cysteine) is attached at Cys20. Helical transmembrane passes span 43–63 (SIIF…IFIF) and 82–102 (IETI…IPTV). The interval 321-374 (MKPMILGNNDPYDNEFKKEEDHNSKEMEKISKSAKDENASKFGSKADNDHGGGH) is disordered. The span at 334 to 374 (NEFKKEEDHNSKEMEKISKSAKDENASKFGSKADNDHGGGH) shows a compositional bias: basic and acidic residues.

Belongs to the cytochrome c oxidase subunit 2 family.

The protein resides in the cell membrane. The catalysed reaction is 2 a quinol + O2 = 2 a quinone + 2 H2O. In terms of biological role, catalyzes quinol oxidation with the concomitant reduction of oxygen to water. Subunit II transfers the electrons from a quinol to the binuclear center of the catalytic subunit I. The chain is Probable quinol oxidase subunit 2 (qoxA) from Staphylococcus haemolyticus (strain JCSC1435).